Consider the following 321-residue polypeptide: Acetyl-coenzyme A carboxylase carboxyl transferase subunit alpha (321 aa).

One can recognise a CoA carboxyltransferase C-terminal domain in the interval 32-293 (DISEEIARLQ…KRVLQDQLKE (262 aa)).

It belongs to the AccA family. In terms of assembly, acetyl-CoA carboxylase is a heterohexamer composed of biotin carboxyl carrier protein (AccB), biotin carboxylase (AccC) and two subunits each of ACCase subunit alpha (AccA) and ACCase subunit beta (AccD).

The protein localises to the cytoplasm. The enzyme catalyses N(6)-carboxybiotinyl-L-lysyl-[protein] + acetyl-CoA = N(6)-biotinyl-L-lysyl-[protein] + malonyl-CoA. The protein operates within lipid metabolism; malonyl-CoA biosynthesis; malonyl-CoA from acetyl-CoA: step 1/1. In terms of biological role, component of the acetyl coenzyme A carboxylase (ACC) complex. First, biotin carboxylase catalyzes the carboxylation of biotin on its carrier protein (BCCP) and then the CO(2) group is transferred by the carboxyltransferase to acetyl-CoA to form malonyl-CoA. In Chromobacterium violaceum (strain ATCC 12472 / DSM 30191 / JCM 1249 / CCUG 213 / NBRC 12614 / NCIMB 9131 / NCTC 9757 / MK), this protein is Acetyl-coenzyme A carboxylase carboxyl transferase subunit alpha.